The chain runs to 430 residues: Adenylosuccinate synthetase (430 aa).

Residues 12-18 and 40-42 contribute to the GTP site; these read GDEGKGK and GHT. Catalysis depends on Asp13, which acts as the Proton acceptor. Positions 13 and 40 each coordinate Mg(2+). IMP-binding positions include 13–16, 38–41, Thr128, Arg142, Gln223, Thr238, and Arg302; these read DEGK and NAGH. Residue His41 is the Proton donor of the active site. 298–304 is a substrate binding site; it reads TTTGRPR. GTP is bound by residues Arg304, 330 to 332, and 413 to 415; these read SID and SVG.

This sequence belongs to the adenylosuccinate synthetase family. As to quaternary structure, homodimer. Requires Mg(2+) as cofactor.

The protein resides in the cytoplasm. It carries out the reaction IMP + L-aspartate + GTP = N(6)-(1,2-dicarboxyethyl)-AMP + GDP + phosphate + 2 H(+). Its pathway is purine metabolism; AMP biosynthesis via de novo pathway; AMP from IMP: step 1/2. In terms of biological role, plays an important role in the de novo pathway of purine nucleotide biosynthesis. Catalyzes the first committed step in the biosynthesis of AMP from IMP. This chain is Adenylosuccinate synthetase, found in Lactococcus lactis subsp. cremoris (strain MG1363).